A 135-amino-acid polypeptide reads, in one-letter code: Protein PsiE homolog (135 aa).

Transmembrane regions (helical) follow at residues 13–33 (VLQW…VIFL), 54–74 (YMLV…ALIV), 82–102 (HFPL…LIIV), and 107–127 (PNDT…LYLA).

The protein belongs to the PsiE family.

The protein localises to the cell inner membrane. The protein is Protein PsiE homolog of Edwardsiella ictaluri (strain 93-146).